The primary structure comprises 315 residues: Ribosomal RNA small subunit methyltransferase H (315 aa).

S-adenosyl-L-methionine is bound by residues G37–H39, D57, F83, D105, and Q112.

It belongs to the methyltransferase superfamily. RsmH family.

It localises to the cytoplasm. It catalyses the reaction cytidine(1402) in 16S rRNA + S-adenosyl-L-methionine = N(4)-methylcytidine(1402) in 16S rRNA + S-adenosyl-L-homocysteine + H(+). Functionally, specifically methylates the N4 position of cytidine in position 1402 (C1402) of 16S rRNA. The chain is Ribosomal RNA small subunit methyltransferase H from Pseudomonas putida (strain ATCC 47054 / DSM 6125 / CFBP 8728 / NCIMB 11950 / KT2440).